The chain runs to 1637 residues: Acrosomal protein KIAA1210 (1637 aa).

Disordered regions lie at residues 44–121 (RFSS…LSIS), 141–293 (RTTT…KNEW), 341–404 (PTTT…KKKD), 438–759 (VCGE…SQSE), 865–896 (PKLP…EGST), 935–975 (SKYS…FQPL), 1017–1057 (LQPW…IPSQ), 1090–1137 (FPFQ…SRRA), 1182–1238 (SQTI…SKSF), and 1539–1558 (NKGD…PAFS). A compositionally biased stretch (basic residues) spans 103-114 (HRSKSLKIKSQR). Residues 141 to 156 (RTTTTFRRRSSQCSST) show a composition bias toward low complexity. Residues 170 to 190 (SESSTQQFSGFSTPATSQGCL) show a composition bias toward polar residues. The segment covering 229 to 249 (AKEKTTTKTKEAEQGEQKVDS) has biased composition (basic and acidic residues). Residues 250–261 (TELSSQEQSSKT) show a composition bias toward low complexity. Over residues 341 to 353 (PTTTEAEVTTVQK) the composition is skewed to polar residues. A compositionally biased stretch (basic and acidic residues) spans 355-374 (PSDKGDVERELADIDVEAQK). Over residues 508 to 526 (TGETSSDSKSTSEYESSSE) the composition is skewed to low complexity. A compositionally biased stretch (acidic residues) spans 550 to 572 (ADDEEDGDDEKEEKDNDDDDEEN). Low complexity predominate over residues 689 to 698 (DLSSSEQEQQ). Polar residues-rich tracts occupy residues 745–759 (SPTQ…SQSE), 879–896 (GKQS…EGST), 935–956 (SKYS…STSA), 964–975 (SQPSVTPKFQPL), and 1017–1030 (LQPW…QVSV).

Interacts with TOP2B. Predominantly expressed in testis (at protein level).

It is found in the cytoplasmic vesicle. Its subcellular location is the secretory vesicle. The protein localises to the acrosome. This chain is Acrosomal protein KIAA1210, found in Mus musculus (Mouse).